A 541-amino-acid chain; its full sequence is Multidrug transporter protein MdtP (541 aa).

The next 14 membrane-spanning stretches (helical) occupy residues 14-34 (LLIT…TIVG), 40-60 (IVGD…YLLT), 79-99 (IVYV…GMAN), 112-132 (GIGG…LFTG), 141-161 (VFGA…GWIV), 168-188 (WVFY…ARGL), 201-221 (IAGI…LSFG), 229-249 (SWQI…FIIV), 273-293 (LIGF…PFFM), 307-327 (IMTP…QLVY), 329-349 (IGIK…FLLL), 359-379 (LVAT…MPIL), 401-420 (FFRS…VMNA), and 492-512 (LHSV…FTLF).

It belongs to the major facilitator superfamily. EmrB family.

Its subcellular location is the cell membrane. Its function is as follows. Multidrug efflux transporter. Contributes to resistance to several antibiotics, including fusidic acid, novobiocin, streptomycin and actinomycin, possibly by pumping these structurally unrelated antibiotics out of cells. The protein is Multidrug transporter protein MdtP of Bacillus subtilis (strain 168).